Reading from the N-terminus, the 180-residue chain is MAITTAGDICALYPLCPILLHCSTLMHLSPLRNTPHVLHAAAAVTEYAFVLSTLVFPSFCFSLPSPFPFPEGEGGAFYVRLFLNALSEEVLFRAYIPERLCHHATSCTARACGEVLSVLLFALAHRPAGSATLFAGAAGAALRVLFVREKKRSGSRARASALCTAVHALWNAYAIAAAAR.

Helical transmembrane passes span 37–59 and 128–147; these read VLHA…FPSF and AGSA…VLFV.

It is found in the cell membrane. This is an uncharacterized protein from Treponema pallidum (strain Nichols).